The sequence spans 158 residues: UPF0178 protein Rpal_2485 (158 aa).

It belongs to the UPF0178 family.

The sequence is that of UPF0178 protein Rpal_2485 from Rhodopseudomonas palustris (strain TIE-1).